We begin with the raw amino-acid sequence, 124 residues long: Small ribosomal subunit protein uS12 (124 aa).

D89 is subject to 3-methylthioaspartic acid.

Belongs to the universal ribosomal protein uS12 family. Part of the 30S ribosomal subunit. Contacts proteins S8 and S17. May interact with IF1 in the 30S initiation complex.

With S4 and S5 plays an important role in translational accuracy. Functionally, interacts with and stabilizes bases of the 16S rRNA that are involved in tRNA selection in the A site and with the mRNA backbone. Located at the interface of the 30S and 50S subunits, it traverses the body of the 30S subunit contacting proteins on the other side and probably holding the rRNA structure together. The combined cluster of proteins S8, S12 and S17 appears to hold together the shoulder and platform of the 30S subunit. This is Small ribosomal subunit protein uS12 from Haemophilus ducreyi (strain 35000HP / ATCC 700724).